A 503-amino-acid polypeptide reads, in one-letter code: Aromatase (503 aa).

Residue Cys-437 coordinates heme.

The protein belongs to the cytochrome P450 family. Heme serves as cofactor.

It localises to the membrane. It catalyses the reaction testosterone + 3 reduced [NADPH--hemoprotein reductase] + 3 O2 = 17beta-estradiol + formate + 3 oxidized [NADPH--hemoprotein reductase] + 4 H2O + 4 H(+). The enzyme catalyses androst-4-ene-3,17-dione + 3 reduced [NADPH--hemoprotein reductase] + 3 O2 = estrone + formate + 3 oxidized [NADPH--hemoprotein reductase] + 4 H2O + 4 H(+). In terms of biological role, catalyzes the formation of aromatic C18 estrogens from C19 androgens. This chain is Aromatase (CYP19A1), found in Oryctolagus cuniculus (Rabbit).